A 308-amino-acid chain; its full sequence is HPr kinase/phosphorylase (308 aa).

Residues H141 and K162 contribute to the active site. 156–163 serves as a coordination point for ATP; it reads GKSGVGKS. S163 lines the Mg(2+) pocket. D180 acts as the Proton acceptor; for phosphorylation activity. Proton donor; for dephosphorylation activity in catalysis. The interval 204-213 is important for the catalytic mechanism of both phosphorylation and dephosphorylation; it reads MEIRGVGILD. E205 contacts Mg(2+). The active site involves R246. The segment at 267–272 is important for the catalytic mechanism of dephosphorylation; it reads PVKPGR.

This sequence belongs to the HPrK/P family. In terms of assembly, homohexamer. Mg(2+) serves as cofactor.

The enzyme catalyses [HPr protein]-L-serine + ATP = [HPr protein]-O-phospho-L-serine + ADP + H(+). It catalyses the reaction [HPr protein]-O-phospho-L-serine + phosphate + H(+) = [HPr protein]-L-serine + diphosphate. In terms of biological role, catalyzes the ATP- as well as the pyrophosphate-dependent phosphorylation of a specific serine residue in HPr, a phosphocarrier protein of the phosphoenolpyruvate-dependent sugar phosphotransferase system (PTS). HprK/P also catalyzes the pyrophosphate-producing, inorganic phosphate-dependent dephosphorylation (phosphorolysis) of seryl-phosphorylated HPr (P-Ser-HPr). The two antagonistic activities of HprK/P are regulated by several intracellular metabolites, which change their concentration in response to the absence or presence of rapidly metabolisable carbon sources (glucose, fructose, etc.) in the growth medium. Therefore, by controlling the phosphorylation state of HPr, HPrK/P is a sensor enzyme that plays a major role in the regulation of carbon metabolism and sugar transport: it mediates carbon catabolite repression (CCR), and regulates PTS-catalyzed carbohydrate uptake and inducer exclusion. This Peptoclostridium acidaminophilum (Eubacterium acidaminophilum) protein is HPr kinase/phosphorylase.